The following is a 353-amino-acid chain: MTIALGKFTKDENDLFDIMDDWLRRDRFVFVGWSGLLLFPCAYFAIGGWFTGTTFVTSWYTHGLASSYLEGCNFLTAAVSTPANSLAHSLLLLWGPEAQGDFTRWCQLGGLWTFVALHGAFGLIGFMLRQFELARSVQLRPYNAIAFSGPIAVFVSVFLIYPLGQSGWFFAPSFGVAAIFRFILFFQGFHNWTLNPFHMMGVAGVLGAALLCAIHGATVENTLFEDGDGANTFRAFNPTQAEETYSMVTANRFWSQIFGVAFSNKRWLHFFMLFVPVTGLWMSALGVVGLALNLRAYDFVSQEIRAAEDPEFETFYTKNILLNEGIRAWMAAQDQPHENLIFPEEVLPRGNAL.

Residue Thr2 is modified to N-acetylthreonine. Residue Thr2 is modified to Phosphothreonine. A helical transmembrane segment spans residues 41–61 (CAYFAIGGWFTGTTFVTSWYT). His118 is a chlorophyll a binding site. Residues 125–141 (GFMLRQFELARSVQLRP) form a helical membrane-spanning segment. Residues Gln130 and Asn143 each contribute to the pheophytin a site. The chain crosses the membrane as a helical span at residues 153 to 166 (VFVSVFLIYPLGQS). His198 serves as a coordination point for chlorophyll a. A helical transmembrane segment spans residues 208 to 228 (AALLCAIHGATVENTLFEDGD). Residues His215 and Phe262 each coordinate a plastoquinone. Fe cation is bound at residue His215. His269 lines the Fe cation pocket. The chain crosses the membrane as a helical span at residues 279–295 (GLWMSALGVVGLALNLR).

It belongs to the reaction center PufL/M/PsbA/D family. In terms of assembly, PSII is composed of 1 copy each of membrane proteins PsbA, PsbB, PsbC, PsbD, PsbE, PsbF, PsbH, PsbI, PsbJ, PsbK, PsbL, PsbM, PsbT, PsbX, PsbY, PsbZ, Psb30/Ycf12, at least 3 peripheral proteins of the oxygen-evolving complex and a large number of cofactors. It forms dimeric complexes. The D1/D2 heterodimer binds P680, chlorophylls that are the primary electron donor of PSII, and subsequent electron acceptors. It shares a non-heme iron and each subunit binds pheophytin, quinone, additional chlorophylls, carotenoids and lipids. There is also a Cl(-1) ion associated with D1 and D2, which is required for oxygen evolution. The PSII complex binds additional chlorophylls, carotenoids and specific lipids. serves as cofactor.

It is found in the plastid. It localises to the chloroplast thylakoid membrane. It carries out the reaction 2 a plastoquinone + 4 hnu + 2 H2O = 2 a plastoquinol + O2. Functionally, photosystem II (PSII) is a light-driven water:plastoquinone oxidoreductase that uses light energy to abstract electrons from H(2)O, generating O(2) and a proton gradient subsequently used for ATP formation. It consists of a core antenna complex that captures photons, and an electron transfer chain that converts photonic excitation into a charge separation. The D1/D2 (PsbA/PsbD) reaction center heterodimer binds P680, the primary electron donor of PSII as well as several subsequent electron acceptors. D2 is needed for assembly of a stable PSII complex. This chain is Photosystem II D2 protein, found in Carica papaya (Papaya).